The chain runs to 445 residues: Tubulin beta chain (445 aa).

The MREI motif motif lies at 1 to 4; that stretch reads MREI. 8 residues coordinate GTP: Q11, E69, S138, G142, T143, G144, N204, and N226. E69 contacts Mg(2+). Residues 421-445 form a disordered region; sequence EYQQYQDATAEEEGEGEEEGDEEVA. Over residues 429-445 the composition is skewed to acidic residues; that stretch reads TAEEEGEGEEEGDEEVA. At E438 the chain carries 5-glutamyl polyglutamate.

Belongs to the tubulin family. As to quaternary structure, dimer of alpha and beta chains. A typical microtubule is a hollow water-filled tube with an outer diameter of 25 nm and an inner diameter of 15 nM. Alpha-beta heterodimers associate head-to-tail to form protofilaments running lengthwise along the microtubule wall with the beta-tubulin subunit facing the microtubule plus end conferring a structural polarity. Microtubules usually have 13 protofilaments but different protofilament numbers can be found in some organisms and specialized cells. The cofactor is Mg(2+). Some glutamate residues at the C-terminus are polyglycylated, resulting in polyglycine chains on the gamma-carboxyl group. Glycylation is mainly limited to tubulin incorporated into axonemes (cilia and flagella) whereas glutamylation is prevalent in neuronal cells, centrioles, axonemes, and the mitotic spindle. Both modifications can coexist on the same protein on adjacent residues, and lowering polyglycylation levels increases polyglutamylation, and reciprocally. The precise function of polyglycylation is still unclear. In terms of processing, some glutamate residues at the C-terminus are polyglutamylated, resulting in polyglutamate chains on the gamma-carboxyl group. Polyglutamylation plays a key role in microtubule severing by spastin (SPAST). SPAST preferentially recognizes and acts on microtubules decorated with short polyglutamate tails: severing activity by SPAST increases as the number of glutamates per tubulin rises from one to eight, but decreases beyond this glutamylation threshold. In terms of tissue distribution, brain.

It localises to the cytoplasm. The protein localises to the cytoskeleton. Tubulin is the major constituent of microtubules, a cylinder consisting of laterally associated linear protofilaments composed of alpha- and beta-tubulin heterodimers. Microtubules grow by the addition of GTP-tubulin dimers to the microtubule end, where a stabilizing cap forms. Below the cap, tubulin dimers are in GDP-bound state, owing to GTPase activity of alpha-tubulin. The protein is Tubulin beta chain of Pseudopleuronectes americanus (Winter flounder).